Reading from the N-terminus, the 708-residue chain is Putative adhesion G protein-coupled receptor F2P (708 aa).

The Extracellular portion of the chain corresponds to 1 to 451; it reads MGLTAYGNRR…ESLILTYITY (451 aa). N-linked (GlcNAc...) asparagine glycosylation is found at N21, N220, N252, N260, N305, N313, and N358. Residues 293 to 442 enclose the GAIN-B domain; sequence MGTTISGDNI…SILMSPHILE (150 aa). 2 cysteine pairs are disulfide-bonded: C394-C421 and C409-C423. Residues 394–442 are GPS; sequence CVGWHSVENRWDQQACKMIQENSQQAVCKCRPSKLFTSFSILMSPHILE. The helical transmembrane segment at 452–472 threads the bilayer; that stretch reads VGLGISICSLILCLSIEVLVW. At 473 to 487 the chain is on the cytoplasmic side; the sequence is SQVTKTEITYLRHVC. A helical transmembrane segment spans residues 488-508; the sequence is IVNIAATLLMADVWFIVASFL. Residues 509-530 lie on the Extracellular side of the membrane; it reads SGPITHHKGCVAATFFVHFFYL. A helical transmembrane segment spans residues 531-551; that stretch reads SVFFWMLAKALLILYGIMIVF. Residues 552–557 are Cytoplasmic-facing; the sequence is HTLPKS. The chain crosses the membrane as a helical span at residues 558–578; it reads VLVASLFSVGYGCPLAIAAIT. At 579 to 606 the chain is on the extracellular side; it reads VAATEPGKGYLRPEICWLNWDMTKALLA. A helical membrane pass occupies residues 607-627; sequence FVIPALAIVVVNLITVTLVIV. Residues 628-650 lie on the Cytoplasmic side of the membrane; sequence KTQRAAIGNSMFQEVRAIVRISK. The helical transmembrane segment at 651 to 671 threads the bilayer; the sequence is NIAILTPLLGLTWGFGVATVI. The Extracellular portion of the chain corresponds to 672 to 674; the sequence is DDR. A helical transmembrane segment spans residues 675–695; it reads SLAFHIIFSLLNAFQVSPDAS. Residues 696 to 708 are Cytoplasmic-facing; it reads DQVQSERIHEDVL.

Belongs to the G-protein coupled receptor 2 family. Adhesion G-protein coupled receptor (ADGR) subfamily. As to expression, high expression in kidney. Up-regulated in lung adenocarcinomas and prostate cancers.

Its subcellular location is the membrane. Functionally, orphan receptor. This Homo sapiens (Human) protein is Putative adhesion G protein-coupled receptor F2P.